We begin with the raw amino-acid sequence, 158 residues long: Hypoxanthine DNA glycosylase (158 aa).

Asn-39 is an active-site residue.

It belongs to the uracil-DNA glycosylase (UDG) superfamily. Type 6 (HDG) family.

Its function is as follows. Excises hypoxanthine, a deamination product of adenine, from double-stranded DNA. Acts on double-stranded DNA containing G/I, T/I, A/I and C/I base pairs, but not on single-stranded inosine-containing DNA. Also has minor xanthine DNA glycosylase activity. Lacks any detectable uracil-DNA glycosylase activity. This is Hypoxanthine DNA glycosylase from Methanosarcina acetivorans (strain ATCC 35395 / DSM 2834 / JCM 12185 / C2A).